Consider the following 722-residue polypeptide: Solute carrier organic anion transporter family member 4C1 (722 aa).

The tract at residues 1-81 (MQGSKGIENP…PGSQLSELEE (81 aa)) is disordered. Residues 1 to 101 (MQGSKGIENP…QCLQRCNTPQ (101 aa)) are Cytoplasmic-facing. 2 positions are modified to phosphoserine: Ser15 and Ser16. Residue Thr19 is modified to Phosphothreonine. A phosphoserine mark is found at Ser24, Ser26, and Ser28. Residues 25–46 (ASPSQVEVSAVASRNQNGGSQP) show a composition bias toward polar residues. The helical transmembrane segment at 102-122 (GFLLHYCLLALTQGIVVNGLV) threads the bilayer. At 123 to 141 (NISISTIEKRYEMKSSLTG) the chain is on the extracellular side. The helical transmembrane segment at 142 to 162 (LISSSYDISFCVLSLFVSFFG) threads the bilayer. Residues 163–168 (ERGHKP) are Cytoplasmic-facing. Residues 169–193 (RWLAFASFMIGLGALVFSLPHFFSG) form a helical membrane-spanning segment. Topologically, residues 194 to 218 (RYELGSIFEDTCLTRNSTRCSSSTS) are extracellular. Residues 219-249 (LLSNYFYVFVLGQLLLGTGGTPLYTLGTAFI) traverse the membrane as a helical segment. Topologically, residues 250 to 269 (DDSVPTHKSSLYIGIGYSMS) are cytoplasmic. A helical transmembrane segment spans residues 270 to 290 (ILGPAIGYVLGGQLLTMYIDI). At 291-306 (AMGQSSDLTEDDPRWL) the chain is on the extracellular side. Residues 307–331 (GAWWIGFLLAWLFAWSLIMPFSCFP) traverse the membrane as a helical segment. Residues 332–376 (KHLPGTAKIQAGKTSQTHQNNSTSFQHTDENFGKSIKDFPTAVKN) lie on the Cytoplasmic side of the membrane. Residues 377–398 (LMRNTVFICLVLSTTSEALITT) form a helical membrane-spanning segment. The Extracellular segment spans residues 399–418 (GFATFLPKFIENQFGLTSSF). A helical membrane pass occupies residues 419-442 (AATLGGAVLIPGAALGQILGGVLV). Over 443 to 446 (SKFK) the chain is Cytoplasmic. Residues 447–470 (MKCKNTMKFALCTSGVALVLSFVF) traverse the membrane as a helical segment. Over 471 to 578 (IYAKCENEPF…RTRCSNLPIF (108 aa)) the chain is Extracellular. The region spanning 494–549 (GNLTAPCNANCNCLRSYYYPLCGSDGIQYFSPCFAGCLNSVSNRKPKVYYNCSCIE) is the Kazal-like domain. 3 disulfide bridges follow: Cys500/Cys530, Cys506/Cys526, and Cys515/Cys547. Residues 579 to 601 (LGIFFITVIFTFMAGTPITVSIL) traverse the membrane as a helical segment. At 602–610 (RCVNHRHRS) the chain is on the cytoplasmic side. Residues 611–636 (LALGVQFMLLRLLGTIPGPIIFGVII) form a helical membrane-spanning segment. The Extracellular portion of the chain corresponds to 637 to 670 (DSTCVLWDVNECGIKGACWIYDNIKMAHMLVAIS). A helical transmembrane segment spans residues 671-688 (VTCKVITIFFNGLAIVLY). Topologically, residues 689-722 (KPPPPGTEVSFQSQNVIVSTISVEEDLDKAENEG) are cytoplasmic.

This sequence belongs to the organo anion transporter (TC 2.A.60) family. As to expression, strongly expressed in initial segment of epididymis and seminal vesicles.

It localises to the basolateral cell membrane. The enzyme catalyses estrone 3-sulfate(out) = estrone 3-sulfate(in). The catalysed reaction is L-thyroxine(out) = L-thyroxine(in). It carries out the reaction 3,3',5-triiodo-L-thyronine(out) = 3,3',5-triiodo-L-thyronine(in). It catalyses the reaction chenodeoxycholate(out) = chenodeoxycholate(in). The enzyme catalyses glycocholate(out) = glycocholate(in). The catalysed reaction is L-homoarginine(in) = L-homoarginine(out). It carries out the reaction L-arginine(in) = L-arginine(out). It catalyses the reaction N(omega),N(omega)-dimethyl-L-arginine(out) = N(omega),N(omega)-dimethyl-L-arginine(in). In terms of biological role, mediates the transport of organic anions such as steroids (estrone 3-sulfate, chenodeoxycholate, glycocholate) and thyroid hormones (3,3',5-triiodo-L-thyronine (T3), L-thyroxine (T4)), in the kidney. Capable of transporting cAMP and pharmacological substances such as digoxin, ouabain and methotrexate. Transport is independent of sodium, chloride ion, and ATP. Transport activity is stimulated by an acidic extracellular environment due to increased substrate affinity to the transporter. The driving force for this transport activity is currently not known. The role of hydrogencarbonate (HCO3(-), bicarbonate) as the probable counteranion that exchanges for organic anions is still not well defined. Functions as an uptake transporter at the apical membrane, suggesting a role in renal reabsorption. Involved in the renal secretion of the uremic toxin ADMA (N(omega),N(omega)-dimethyl-L-arginine or asymmetrical dimethylarginine), which is associated to cardiovascular events and mortality, and the structurally related amino acids L-arginine and L-homoarginine (a cardioprotective biomarker). Can act bidirectionally, suggesting a dual protective role of this transport protein; exporting L-homoarginine after being synthesized in proximal tubule cells, and mediating uptake of ADMA from the blood into proximal tubule cells where it is degraded by the enzyme dimethylarginine dimethylaminohydrolase 1 (DDAH1). May be involved in sperm maturation by enabling directed movement of organic anions and compounds within or between cells. This ion-transporting process is important to maintain the strict epididymal homeostasis necessary for sperm maturation. May have a role in secretory functions since seminal vesicle epithelial cells are assumed to secrete proteins involved in decapacitation by modifying surface proteins to facilitate the acquisition of the ability to fertilize the egg. In Mus musculus (Mouse), this protein is Solute carrier organic anion transporter family member 4C1.